Consider the following 205-residue polypeptide: uncharacterized protein (205 aa).

The interval 72–114 (ARVSPYGYESDSENEEYTRISSATSSNVLTDSPTTTQDDPTGR) is disordered. Polar residues predominate over residues 90–100 (RISSATSSNVL). A compositionally biased stretch (low complexity) spans 101–110 (TDSPTTTQDD).

This is an uncharacterized protein from Equus caballus (Horse).